The following is a 251-amino-acid chain: Regulator of G-protein signaling 7-binding protein B (251 aa).

Positions 1-43 (MCSAPNGRKNRPRSAANIFQIGKSSVRDPERRESTESARRAQR) are disordered. Over residues 25–43 (SVRDPERRESTESARRAQR) the composition is skewed to basic and acidic residues. S-palmitoyl cysteine attachment occurs at residues cysteine 246 and cysteine 247.

This sequence belongs to the RGS7BP/RGS9BP family. Post-translationally, palmitoylated. Undergoes rapid palmitoylation turnover. Palmitoylation regulates the cell membrane and nuclear shuttling and the regulation of GPCR signaling. Upon depalmitoylation, it is targeted from the plasma membrane into the nucleus. GPCR signaling inhibits depalmitoylation and promotes localization to the plasma membrane.

The protein resides in the nucleus. The protein localises to the cytoplasm. Its subcellular location is the cell membrane. Functionally, regulator of G protein-coupled receptor (GPCR) signaling. Regulatory subunit of the R7-Gbeta5 complexes that acts by controlling the subcellular location of the R7-Gbeta5 complexes. When palmitoylated, it targets the R7-Gbeta5 complexes to the plasma membrane, leading to inhibit G protein alpha subunits. When it is unpalmitoylated, the R7-Gbeta5 complexes undergo a nuclear/cytoplasmic shuttling. In Danio rerio (Zebrafish), this protein is Regulator of G-protein signaling 7-binding protein B (rgs7bpb).